A 281-amino-acid chain; its full sequence is Bifunctional protein FolD (281 aa).

163–165 is a binding site for NADP(+); sequence GRS.

It belongs to the tetrahydrofolate dehydrogenase/cyclohydrolase family. Homodimer.

It carries out the reaction (6R)-5,10-methylene-5,6,7,8-tetrahydrofolate + NADP(+) = (6R)-5,10-methenyltetrahydrofolate + NADPH. The catalysed reaction is (6R)-5,10-methenyltetrahydrofolate + H2O = (6R)-10-formyltetrahydrofolate + H(+). It functions in the pathway one-carbon metabolism; tetrahydrofolate interconversion. Functionally, catalyzes the oxidation of 5,10-methylenetetrahydrofolate to 5,10-methenyltetrahydrofolate and then the hydrolysis of 5,10-methenyltetrahydrofolate to 10-formyltetrahydrofolate. This is Bifunctional protein FolD from Leuconostoc mesenteroides subsp. mesenteroides (strain ATCC 8293 / DSM 20343 / BCRC 11652 / CCM 1803 / JCM 6124 / NCDO 523 / NBRC 100496 / NCIMB 8023 / NCTC 12954 / NRRL B-1118 / 37Y).